A 438-amino-acid chain; its full sequence is Enolase (438 aa).

2 residues coordinate substrate: His159 and Glu168. Residue Glu211 is the Proton donor of the active site. Mg(2+)-binding residues include Asp246, Glu297, and Asp322. Substrate is bound by residues Glu297 and Asp322. Lys347 serves as the catalytic Proton acceptor. Residues 374 to 377 and Lys398 each bind substrate; that span reads SHRS.

It belongs to the enolase family. In terms of assembly, homodimer. It depends on Mg(2+) as a cofactor.

The protein localises to the cytoplasm. It catalyses the reaction (2R)-2-phosphoglycerate = phosphoenolpyruvate + H2O. It participates in carbohydrate degradation; glycolysis; pyruvate from D-glyceraldehyde 3-phosphate: step 4/5. Its function is as follows. Involved in osmoadaptation. The sequence is that of Enolase (enoA) from Emericella nidulans (strain FGSC A4 / ATCC 38163 / CBS 112.46 / NRRL 194 / M139) (Aspergillus nidulans).